The primary structure comprises 141 residues: Large ribosomal subunit protein uL11 (141 aa).

It belongs to the universal ribosomal protein uL11 family. In terms of assembly, part of the ribosomal stalk of the 50S ribosomal subunit. Interacts with L10 and the large rRNA to form the base of the stalk. L10 forms an elongated spine to which L12 dimers bind in a sequential fashion forming a multimeric L10(L12)X complex. Post-translationally, one or more lysine residues are methylated.

Functionally, forms part of the ribosomal stalk which helps the ribosome interact with GTP-bound translation factors. This is Large ribosomal subunit protein uL11 from Geobacter sulfurreducens (strain ATCC 51573 / DSM 12127 / PCA).